A 211-amino-acid polypeptide reads, in one-letter code: Peptide methionine sulfoxide reductase MsrA (211 aa).

Cysteine 52 is a catalytic residue.

Belongs to the MsrA Met sulfoxide reductase family.

The enzyme catalyses L-methionyl-[protein] + [thioredoxin]-disulfide + H2O = L-methionyl-(S)-S-oxide-[protein] + [thioredoxin]-dithiol. The catalysed reaction is [thioredoxin]-disulfide + L-methionine + H2O = L-methionine (S)-S-oxide + [thioredoxin]-dithiol. In terms of biological role, has an important function as a repair enzyme for proteins that have been inactivated by oxidation. Catalyzes the reversible oxidation-reduction of methionine sulfoxide in proteins to methionine. This Klebsiella pneumoniae (strain 342) protein is Peptide methionine sulfoxide reductase MsrA.